Reading from the N-terminus, the 466-residue chain is UDP-N-acetylmuramate--L-alanine ligase (466 aa).

114–120 is an ATP binding site; that stretch reads GTHGKTT.

Belongs to the MurCDEF family.

The protein localises to the cytoplasm. The enzyme catalyses UDP-N-acetyl-alpha-D-muramate + L-alanine + ATP = UDP-N-acetyl-alpha-D-muramoyl-L-alanine + ADP + phosphate + H(+). The protein operates within cell wall biogenesis; peptidoglycan biosynthesis. Functionally, cell wall formation. The protein is UDP-N-acetylmuramate--L-alanine ligase of Chlorobium phaeobacteroides (strain DSM 266 / SMG 266 / 2430).